A 308-amino-acid chain; its full sequence is Aspartate carbamoyltransferase catalytic subunit (308 aa).

2 residues coordinate carbamoyl phosphate: R55 and T56. K83 lines the L-aspartate pocket. The carbamoyl phosphate site is built by R105, H133, and Q136. The L-aspartate site is built by R166 and R220. Carbamoyl phosphate-binding residues include G261 and P262.

Belongs to the aspartate/ornithine carbamoyltransferase superfamily. ATCase family. As to quaternary structure, heterododecamer (2C3:3R2) of six catalytic PyrB chains organized as two trimers (C3), and six regulatory PyrI chains organized as three dimers (R2).

It catalyses the reaction carbamoyl phosphate + L-aspartate = N-carbamoyl-L-aspartate + phosphate + H(+). Its pathway is pyrimidine metabolism; UMP biosynthesis via de novo pathway; (S)-dihydroorotate from bicarbonate: step 2/3. Catalyzes the condensation of carbamoyl phosphate and aspartate to form carbamoyl aspartate and inorganic phosphate, the committed step in the de novo pyrimidine nucleotide biosynthesis pathway. The polypeptide is Aspartate carbamoyltransferase catalytic subunit (Chlorobaculum parvum (strain DSM 263 / NCIMB 8327) (Chlorobium vibrioforme subsp. thiosulfatophilum)).